Here is a 194-residue protein sequence, read N- to C-terminus: Cyclin-dependent kinase inhibitor 4 (194 aa).

A compositionally biased stretch (basic and acidic residues) spans 49 to 58 (LELRSRRLEK). 2 disordered regions span residues 49–70 (LELR…PRRR) and 107–139 (TRET…SHCK).

The protein belongs to the CDI family. ICK/KRP subfamily.

This is Cyclin-dependent kinase inhibitor 4 (KRP4) from Oryza sativa subsp. japonica (Rice).